Here is a 361-residue protein sequence, read N- to C-terminus: MKFGWIKTTGTDSEERMESVKDALESSIPGLMVEKEEISSVRELGNIKIVSDSLDADVVLINKGEDLEILKSAKLSGKETAVYVEINTKDDEVYATEVSKLDFVDYVVLEGSDWTIIPLENIIADLFGEEIKIVSVVTNVKDAEAAYEILEKGVDGVVLIPEDINEVKDFSKLIERMNSESLKLDYATVTKIEPVGSGDRVCIDTCSMMEMGEGMLIGSYSRGMFLVHSETVENPYVATRPFRVNAGPVHAYILCPENKTKYLSDLKAGDKVLVVNKNGETRESIIGRVKIEKRPLFLVEAEYNGENLRTILQNAETIRLVGEDGKPVSVVDLKVGTKVLIKPDENARHFGMAIKETIVEK.

The protein belongs to the archaeal-type DHQ synthase family.

The enzyme catalyses 2-amino-2,3,7-trideoxy-D-lyxo-hept-6-ulosonate + NAD(+) + H2O = 3-dehydroquinate + NH4(+) + NADH + H(+). Catalyzes the oxidative deamination and cyclization of 2-amino-3,7-dideoxy-D-threo-hept-6-ulosonic acid (ADH) to yield 3-dehydroquinate (DHQ), which is fed into the canonical shikimic pathway of aromatic amino acid biosynthesis. In Methanococcus maripaludis (strain C5 / ATCC BAA-1333), this protein is 3-dehydroquinate synthase.